We begin with the raw amino-acid sequence, 477 residues long: Glutamyl-tRNA(Gln) amidotransferase subunit A (477 aa).

Catalysis depends on charge relay system residues Lys71 and Ser146. Ser170 acts as the Acyl-ester intermediate in catalysis.

This sequence belongs to the amidase family. GatA subfamily. Heterotrimer of A, B and C subunits.

The enzyme catalyses L-glutamyl-tRNA(Gln) + L-glutamine + ATP + H2O = L-glutaminyl-tRNA(Gln) + L-glutamate + ADP + phosphate + H(+). Functionally, allows the formation of correctly charged Gln-tRNA(Gln) through the transamidation of misacylated Glu-tRNA(Gln) in organisms which lack glutaminyl-tRNA synthetase. The reaction takes place in the presence of glutamine and ATP through an activated gamma-phospho-Glu-tRNA(Gln). This is Glutamyl-tRNA(Gln) amidotransferase subunit A from Halothermothrix orenii (strain H 168 / OCM 544 / DSM 9562).